The following is a 195-amino-acid chain: Elongation factor Ts (195 aa).

The tract at residues 81 to 84 is involved in Mg(2+) ion dislocation from EF-Tu; that stretch reads TDFV.

This sequence belongs to the EF-Ts family.

It localises to the cytoplasm. Associates with the EF-Tu.GDP complex and induces the exchange of GDP to GTP. It remains bound to the aminoacyl-tRNA.EF-Tu.GTP complex up to the GTP hydrolysis stage on the ribosome. In Rubrobacter xylanophilus (strain DSM 9941 / JCM 11954 / NBRC 16129 / PRD-1), this protein is Elongation factor Ts.